Here is a 397-residue protein sequence, read N- to C-terminus: Imidazolonepropionase (397 aa).

Fe(3+) is bound by residues His-66 and His-68. Zn(2+) is bound by residues His-66 and His-68. The 4-imidazolone-5-propanoate site is built by Arg-75, Tyr-138, and His-171. Residue Tyr-138 participates in N-formimidoyl-L-glutamate binding. Fe(3+) is bound at residue His-236. Zn(2+) is bound at residue His-236. 4-imidazolone-5-propanoate is bound at residue Gln-239. Asp-311 is a binding site for Fe(3+). Zn(2+) is bound at residue Asp-311. N-formimidoyl-L-glutamate is bound by residues Asn-313 and Gly-315. Ser-316 is a 4-imidazolone-5-propanoate binding site.

It belongs to the metallo-dependent hydrolases superfamily. HutI family. Zn(2+) is required as a cofactor. It depends on Fe(3+) as a cofactor.

The protein resides in the cytoplasm. The enzyme catalyses 4-imidazolone-5-propanoate + H2O = N-formimidoyl-L-glutamate. It participates in amino-acid degradation; L-histidine degradation into L-glutamate; N-formimidoyl-L-glutamate from L-histidine: step 3/3. Functionally, catalyzes the hydrolytic cleavage of the carbon-nitrogen bond in imidazolone-5-propanoate to yield N-formimidoyl-L-glutamate. It is the third step in the universal histidine degradation pathway. The sequence is that of Imidazolonepropionase from Roseobacter denitrificans (strain ATCC 33942 / OCh 114) (Erythrobacter sp. (strain OCh 114)).